The primary structure comprises 1265 residues: 5-oxoprolinase (1265 aa).

This sequence belongs to the oxoprolinase family. Homodimer.

The protein localises to the cytoplasm. The protein resides in the cytosol. The enzyme catalyses 5-oxo-L-proline + ATP + 2 H2O = L-glutamate + ADP + phosphate + H(+). In terms of biological role, catalyzes the cleavage of 5-oxo-L-proline to form L-glutamate coupled to the hydrolysis of ATP to ADP and inorganic phosphate. This chain is 5-oxoprolinase (oplah), found in Dictyostelium discoideum (Social amoeba).